Consider the following 205-residue polypeptide: dITP/XTP pyrophosphatase (205 aa).

Position 7 to 12 (7 to 12 (SNNRGK)) interacts with substrate. Residues Glu39 and Asp68 each contribute to the Mg(2+) site. Asp68 functions as the Proton acceptor in the catalytic mechanism. Residues Ala69, 154 to 157 (FGFD), Lys177, and 182 to 183 (HR) each bind substrate.

This sequence belongs to the HAM1 NTPase family. Homodimer. It depends on Mg(2+) as a cofactor.

The enzyme catalyses XTP + H2O = XMP + diphosphate + H(+). It carries out the reaction dITP + H2O = dIMP + diphosphate + H(+). It catalyses the reaction ITP + H2O = IMP + diphosphate + H(+). Pyrophosphatase that catalyzes the hydrolysis of nucleoside triphosphates to their monophosphate derivatives, with a high preference for the non-canonical purine nucleotides XTP (xanthosine triphosphate), dITP (deoxyinosine triphosphate) and ITP. Seems to function as a house-cleaning enzyme that removes non-canonical purine nucleotides from the nucleotide pool, thus preventing their incorporation into DNA/RNA and avoiding chromosomal lesions. The polypeptide is dITP/XTP pyrophosphatase (Acidovorax ebreus (strain TPSY) (Diaphorobacter sp. (strain TPSY))).